A 740-amino-acid polypeptide reads, in one-letter code: Phosphoribosylformylglycinamidine synthase subunit PurL (740 aa).

Residue His50 is part of the active site. Residues Tyr53 and Lys92 each coordinate ATP. Glu94 is a binding site for Mg(2+). Residues 95 to 98 (SHNH) and Arg117 contribute to the substrate site. The Proton acceptor role is filled by His96. Mg(2+) is bound at residue Asp118. Substrate is bound at residue Gln241. Residue Asp269 participates in Mg(2+) binding. 313–315 (ESQ) is a substrate binding site. Positions 495 and 532 each coordinate ATP. Mg(2+) is bound at residue Asn533. Substrate is bound at residue Ser535.

Belongs to the FGAMS family. As to quaternary structure, monomer. Part of the FGAM synthase complex composed of 1 PurL, 1 PurQ and 2 PurS subunits.

The protein resides in the cytoplasm. The catalysed reaction is N(2)-formyl-N(1)-(5-phospho-beta-D-ribosyl)glycinamide + L-glutamine + ATP + H2O = 2-formamido-N(1)-(5-O-phospho-beta-D-ribosyl)acetamidine + L-glutamate + ADP + phosphate + H(+). Its pathway is purine metabolism; IMP biosynthesis via de novo pathway; 5-amino-1-(5-phospho-D-ribosyl)imidazole from N(2)-formyl-N(1)-(5-phospho-D-ribosyl)glycinamide: step 1/2. Functionally, part of the phosphoribosylformylglycinamidine synthase complex involved in the purines biosynthetic pathway. Catalyzes the ATP-dependent conversion of formylglycinamide ribonucleotide (FGAR) and glutamine to yield formylglycinamidine ribonucleotide (FGAM) and glutamate. The FGAM synthase complex is composed of three subunits. PurQ produces an ammonia molecule by converting glutamine to glutamate. PurL transfers the ammonia molecule to FGAR to form FGAM in an ATP-dependent manner. PurS interacts with PurQ and PurL and is thought to assist in the transfer of the ammonia molecule from PurQ to PurL. This Brucella canis (strain ATCC 23365 / NCTC 10854 / RM-666) protein is Phosphoribosylformylglycinamidine synthase subunit PurL.